The primary structure comprises 273 residues: Formamidopyrimidine-DNA glycosylase (273 aa).

Catalysis depends on Pro2, which acts as the Schiff-base intermediate with DNA. The active-site Proton donor is Glu3. Lys58 serves as the catalytic Proton donor; for beta-elimination activity. DNA-binding residues include His91, Arg110, and Arg153. The segment at 238–272 (KVYGKEGQPCPRCGEDFVKIKICGRGTTYCLHCQK) adopts an FPG-type zinc-finger fold. Arg262 acts as the Proton donor; for delta-elimination activity in catalysis.

The protein belongs to the FPG family. Monomer. Requires Zn(2+) as cofactor.

The catalysed reaction is Hydrolysis of DNA containing ring-opened 7-methylguanine residues, releasing 2,6-diamino-4-hydroxy-5-(N-methyl)formamidopyrimidine.. It carries out the reaction 2'-deoxyribonucleotide-(2'-deoxyribose 5'-phosphate)-2'-deoxyribonucleotide-DNA = a 3'-end 2'-deoxyribonucleotide-(2,3-dehydro-2,3-deoxyribose 5'-phosphate)-DNA + a 5'-end 5'-phospho-2'-deoxyribonucleoside-DNA + H(+). Functionally, involved in base excision repair of DNA damaged by oxidation or by mutagenic agents. Acts as a DNA glycosylase that recognizes and removes damaged bases. Has a preference for oxidized purines, such as 7,8-dihydro-8-oxoguanine (8-oxoG). Has AP (apurinic/apyrimidinic) lyase activity and introduces nicks in the DNA strand. Cleaves the DNA backbone by beta-delta elimination to generate a single-strand break at the site of the removed base with both 3'- and 5'-phosphates. The polypeptide is Formamidopyrimidine-DNA glycosylase (Lactobacillus delbrueckii subsp. bulgaricus (strain ATCC BAA-365 / Lb-18)).